Here is a 253-residue protein sequence, read N- to C-terminus: MATHRLVMVRHGESTWNQENRFCGWFDAELSEKGTEEAKRGAKAIKDAKMEFDICYTSVLKRAIRTLWAILDGTDQMWLPVVRTWRLNERHYGGLTGLNKAETAAKHGEEQVKIWRRSFDIPPPPMDEKHPYYNSISKERRYAGLKPGELPTCESLKDTIARALPFWNEEIVPQIKAGKRVLIAAHGNSLRGIVKHLEGMSDQAIMELNLPTGIPIVYELNKELKPTKPMQFLGDEETVRKAMEAVAAQGKAK.

Threonine 3 carries the phosphothreonine modification. Substrate is bound by residues 10-17 (RHGESTWN), 23-24 (CG), arginine 62, 89-92 (ERHY), lysine 100, and 116-117 (RR). Residue histidine 11 is the Tele-phosphohistidine intermediate of the active site. Serine 14 is subject to Phosphoserine. The active-site Proton donor/acceptor is glutamate 89. Serine 118 bears the Phosphoserine mark. Phosphotyrosine occurs at positions 132 and 133. Position 135 is a phosphoserine (serine 135). A Phosphothreonine modification is found at threonine 152. 187 to 188 (GN) lines the substrate pocket.

The protein belongs to the phosphoglycerate mutase family. BPG-dependent PGAM subfamily. As to quaternary structure, homodimer. Interacts with ENO1. As to expression, expressed in the heart and muscle. Not found in the liver and brain.

It carries out the reaction (2R)-2-phosphoglycerate = (2R)-3-phosphoglycerate. The enzyme catalyses (2R)-3-phospho-glyceroyl phosphate = (2R)-2,3-bisphosphoglycerate + H(+). In terms of biological role, interconversion of 3- and 2-phosphoglycerate with 2,3-bisphosphoglycerate as the primer of the reaction. Can also catalyze the reaction of EC 5.4.2.4 (synthase), but with a reduced activity. This Homo sapiens (Human) protein is Phosphoglycerate mutase 2 (PGAM2).